The sequence spans 280 residues: Probable endonuclease 4 (280 aa).

Zn(2+) contacts are provided by His68, His108, Glu143, Asp177, His180, His214, Asp227, His229, and Glu259.

Belongs to the AP endonuclease 2 family. Zn(2+) is required as a cofactor.

The enzyme catalyses Endonucleolytic cleavage to 5'-phosphooligonucleotide end-products.. Its function is as follows. Endonuclease IV plays a role in DNA repair. It cleaves phosphodiester bonds at apurinic or apyrimidinic (AP) sites, generating a 3'-hydroxyl group and a 5'-terminal sugar phosphate. The chain is Probable endonuclease 4 from Cenarchaeum symbiosum (strain A).